Here is a 245-residue protein sequence, read N- to C-terminus: OCIA domain-containing protein 1 (245 aa).

Positions 1–112 (MNGRADFREP…KKLENSPLGE (112 aa)) constitute an OCIA domain. Ser-108, Ser-116, Ser-123, and Ser-191 each carry phosphoserine. Disordered stretches follow at residues 111–141 (GEAL…VSGQ) and 169–245 (NESA…TWDE). 2 stretches are compositionally biased toward basic and acidic residues: residues 190-210 (ESPK…RESY) and 224-238 (PMHE…KVNK).

This sequence belongs to the OCIAD1 family. As to quaternary structure, interacts with OCIAD2. Interacts with STAT3. As to expression, isoform 1 is highly expressed in many tissues, including testis, brain, placenta, ovary, prostate and mammary gland. Isoform 2 expression is restricted to the central nervous system including brain, cerebellum and spinal cord.

The protein localises to the endosome. Its function is as follows. Maintains stem cell potency. Increases STAT3 phosphorylation and controls ERK phosphorylation. May act as a scaffold, increasing STAT3 recruitment onto endosomes. Involved in integrin-mediated cancer cell adhesion and colony formation in ovarian cancer. This chain is OCIA domain-containing protein 1, found in Homo sapiens (Human).